A 427-amino-acid chain; its full sequence is Retron Mx65 reverse transcriptase (427 aa).

Residues 136–366 (RHYSIHRPRE…GAQRVTGVTV (231 aa)) enclose the Reverse transcriptase domain. Residues aspartate 219, aspartate 315, and aspartate 316 each coordinate Mg(2+).

The protein belongs to the bacterial reverse transcriptase family.

The enzyme catalyses DNA(n) + a 2'-deoxyribonucleoside 5'-triphosphate = DNA(n+1) + diphosphate. In terms of biological role, reverse transcriptase (RT) responsible for synthesis of msDNA-Mx65 (a branched molecule with RNA linked by a 2',5'-phosphodiester bond to ssDNA). The retron transcript serves as primer (from a conserved internal G residue) and template for the reaction, and codes for the RT. The retron is involved in antiviral defense. This is Retron Mx65 reverse transcriptase from Myxococcus xanthus.